The sequence spans 154 residues: Ribonuclease HI (154 aa).

An RNase H type-1 domain is found at 1–142 (MPKQIEIFTD…CDELAKKGAE (142 aa)). Aspartate 10, glutamate 48, aspartate 70, and aspartate 134 together coordinate Mg(2+).

It belongs to the RNase H family. As to quaternary structure, monomer. It depends on Mg(2+) as a cofactor.

It localises to the cytoplasm. It catalyses the reaction Endonucleolytic cleavage to 5'-phosphomonoester.. Endonuclease that specifically degrades the RNA of RNA-DNA hybrids. This is Ribonuclease HI (rnhA) from Haemophilus influenzae (strain ATCC 51907 / DSM 11121 / KW20 / Rd).